The primary structure comprises 625 residues: Glutamyl-tRNA(Gln) amidotransferase subunit E (625 aa).

The protein belongs to the GatB/GatE family. GatE subfamily. In terms of assembly, heterodimer of GatD and GatE.

The catalysed reaction is L-glutamyl-tRNA(Gln) + L-glutamine + ATP + H2O = L-glutaminyl-tRNA(Gln) + L-glutamate + ADP + phosphate + H(+). Allows the formation of correctly charged Gln-tRNA(Gln) through the transamidation of misacylated Glu-tRNA(Gln) in organisms which lack glutaminyl-tRNA synthetase. The reaction takes place in the presence of glutamine and ATP through an activated gamma-phospho-Glu-tRNA(Gln). The GatDE system is specific for glutamate and does not act on aspartate. The polypeptide is Glutamyl-tRNA(Gln) amidotransferase subunit E (Caldivirga maquilingensis (strain ATCC 700844 / DSM 13496 / JCM 10307 / IC-167)).